Here is a 79-residue protein sequence, read N- to C-terminus: MSDFWHKLGCCVVEKPQPKKKRKRIDRSMIGEPMNFVHLTHIGSGDMGASDGLPKAGTVQEQMRSKCGRDRQWSNSRVL.

Residues C10 and C11 are each lipidated (S-palmitoyl cysteine). The CRIB domain maps to I30–G43. A disordered region spans residues H41–L79. Residues M63–Q72 are compositionally biased toward basic and acidic residues.

This sequence belongs to the CDC42SE/SPEC family.

The protein resides in the cytoplasm. It is found in the cytoskeleton. Its subcellular location is the cell membrane. Functionally, probably involved in the organization of the actin cytoskeleton by acting downstream of CDC42, inducing actin filament assembly. The chain is CDC42 small effector protein 1-B (cdc42se1-b) from Xenopus laevis (African clawed frog).